A 402-amino-acid chain; its full sequence is Cysteine-rich venom protein (402 aa).

The N-terminal stretch at 1–13 (MNLALFIIFATIF) is a signal peptide. An SCP domain is found at 57–199 (LETHNQLRNK…VKKVLYTCNY (143 aa)).

The protein belongs to the CRISP family. Contains 7 disulfide bonds. Expressed by the venom gland.

It localises to the secreted. The polypeptide is Cysteine-rich venom protein (Tityus serrulatus (Brazilian scorpion)).